A 513-amino-acid polypeptide reads, in one-letter code: ATP synthase subunit alpha (513 aa).

ATP is bound at residue 171–178; the sequence is GDRQIGKT.

The protein belongs to the ATPase alpha/beta chains family. In terms of assembly, F-type ATPases have 2 components, CF(1) - the catalytic core - and CF(0) - the membrane proton channel. CF(1) has five subunits: alpha(3), beta(3), gamma(1), delta(1), epsilon(1). CF(0) has three main subunits: a(1), b(2) and c(9-12). The alpha and beta chains form an alternating ring which encloses part of the gamma chain. CF(1) is attached to CF(0) by a central stalk formed by the gamma and epsilon chains, while a peripheral stalk is formed by the delta and b chains.

It is found in the cell inner membrane. The catalysed reaction is ATP + H2O + 4 H(+)(in) = ADP + phosphate + 5 H(+)(out). Produces ATP from ADP in the presence of a proton gradient across the membrane. The alpha chain is a regulatory subunit. The polypeptide is ATP synthase subunit alpha (Wolbachia sp. subsp. Drosophila simulans (strain wRi)).